Reading from the N-terminus, the 263-residue chain is MLALRLLNVVAPAYFLCISLVTFVLQLFLFLPSMREDPTATPLFSPAVLHGALFLFLSANALGNYILVVQNSPDDLGACQGTSSQRPQRPPPSTHFCRVCARVTLRHDHHCFFTGNCIGSRNMRNFILFCLYTSLACLYSMVAGVAYISAVLSISFAHPLAFLTLLPTSISQFFSGAVLGSDMFVILMLYLWFAVGLACAGFCCHQLLLILRGQTRYQVRKGVAVRARPWRKNLQEVFGKRWLLGLLVPMFNVGTESSKQQDK.

Over M1–V9 the chain is Cytoplasmic. A helical membrane pass occupies residues V10–F30. Over L31–A47 the chain is Lumenal. Residues V48–V68 traverse the membrane as a helical segment. The Cytoplasmic segment spans residues V69–N125. In terms of domain architecture, DHHC spans P91–L131. C111 (S-palmitoyl cysteine intermediate) is an active-site residue. A run of 2 helical transmembrane segments spans residues F126–A146 and Y147–P167. The Cytoplasmic segment spans residues T168–D182. The chain crosses the membrane as a helical span at residues M183–C203. At C204–K263 the chain is on the lumenal side.

It belongs to the DHHC palmitoyltransferase family. Interacts with CNN3.

It localises to the endoplasmic reticulum membrane. The protein localises to the golgi apparatus membrane. The enzyme catalyses L-cysteinyl-[protein] + hexadecanoyl-CoA = S-hexadecanoyl-L-cysteinyl-[protein] + CoA. Its function is as follows. Palmitoyltransferase that could catalyze the addition of palmitate onto various protein substrates and be involved in a variety of cellular processes. Catalyzes the palmitoylation of KCNMA1, regulating localization of KCNMA1 to the plasma membrane. Might also mediate palmitoylation of CNN3. This Rattus norvegicus (Rat) protein is Palmitoyltransferase ZDHHC22.